We begin with the raw amino-acid sequence, 225 residues long: Iron-sulfur flavoprotein CD630_04720 (225 aa).

Cysteine 49, cysteine 52, cysteine 55, and cysteine 61 together coordinate [4Fe-4S] cluster.

Belongs to the SsuE family. Isf subfamily. Homodimer. Requires FMN as cofactor. [4Fe-4S] cluster is required as a cofactor.

Redox-active protein probably involved in electron transport. The polypeptide is Iron-sulfur flavoprotein CD630_04720 (Clostridioides difficile (strain 630) (Peptoclostridium difficile)).